Reading from the N-terminus, the 150-residue chain is CASP-like protein 2 (150 aa).

Residues 1-17 (MKPEAGDGRSGWRWVAT) lie on the Cytoplasmic side of the membrane. The helical transmembrane segment at 18–38 (FDLILRLAAIVATSTAVLAAM) threads the bilayer. At 39 to 41 (GKT) the chain is on the extracellular side. A helical membrane pass occupies residues 42 to 62 (FVVVVNGVACFYLLMSLPVSI). Over 63–82 (FNIMRPGACPANRAVLTALD) the chain is Cytoplasmic. Residues 83–103 (MVTVALVTAGALVAGILYLVH) traverse the membrane as a helical segment. Topologically, residues 104 to 121 (KAGDTHADWFSIWSQLDS) are extracellular. Residues 122–142 (LSYLAVLALILHVLLSGSILY) form a helical membrane-spanning segment. Residues 143 to 150 (KQALNIMF) lie on the Cytoplasmic side of the membrane.

This sequence belongs to the Casparian strip membrane proteins (CASP) family. As to quaternary structure, homodimer and heterodimers.

It is found in the cell membrane. This Picea sitchensis (Sitka spruce) protein is CASP-like protein 2.